A 228-amino-acid polypeptide reads, in one-letter code: uncharacterized protein (228 aa).

Positions 1 to 34 (MPRDTKPYSRPANAPRPGVKTERSNQFKAASTKY) are disordered.

This is an uncharacterized protein from Orgyia pseudotsugata (Douglas-fir tussock moth).